The primary structure comprises 101 residues: Large ribosomal subunit protein uL23 (101 aa).

The protein belongs to the universal ribosomal protein uL23 family. Part of the 50S ribosomal subunit. Contacts protein L29, and trigger factor when it is bound to the ribosome.

In terms of biological role, one of the early assembly proteins it binds 23S rRNA. One of the proteins that surrounds the polypeptide exit tunnel on the outside of the ribosome. Forms the main docking site for trigger factor binding to the ribosome. This Nocardia farcinica (strain IFM 10152) protein is Large ribosomal subunit protein uL23.